The primary structure comprises 227 residues: 7-cyano-7-deazaguanine synthase (227 aa).

An ATP-binding site is contributed by 8–18 (VSGGADSATVL). Zn(2+)-binding residues include cysteine 192, cysteine 202, cysteine 205, and cysteine 208.

It belongs to the QueC family. Zn(2+) serves as cofactor.

It catalyses the reaction 7-carboxy-7-deazaguanine + NH4(+) + ATP = 7-cyano-7-deazaguanine + ADP + phosphate + H2O + H(+). The protein operates within purine metabolism; 7-cyano-7-deazaguanine biosynthesis. Catalyzes the ATP-dependent conversion of 7-carboxy-7-deazaguanine (CDG) to 7-cyano-7-deazaguanine (preQ(0)). The sequence is that of 7-cyano-7-deazaguanine synthase from Rickettsia canadensis (strain McKiel).